The following is a 255-amino-acid chain: 2-succinyl-6-hydroxy-2,4-cyclohexadiene-1-carboxylate synthase (255 aa).

It belongs to the AB hydrolase superfamily. MenH family. In terms of assembly, monomer.

It carries out the reaction 5-enolpyruvoyl-6-hydroxy-2-succinyl-cyclohex-3-ene-1-carboxylate = (1R,6R)-6-hydroxy-2-succinyl-cyclohexa-2,4-diene-1-carboxylate + pyruvate. It functions in the pathway quinol/quinone metabolism; 1,4-dihydroxy-2-naphthoate biosynthesis; 1,4-dihydroxy-2-naphthoate from chorismate: step 3/7. It participates in quinol/quinone metabolism; menaquinone biosynthesis. Its function is as follows. Catalyzes a proton abstraction reaction that results in 2,5-elimination of pyruvate from 2-succinyl-5-enolpyruvyl-6-hydroxy-3-cyclohexene-1-carboxylate (SEPHCHC) and the formation of 2-succinyl-6-hydroxy-2,4-cyclohexadiene-1-carboxylate (SHCHC). In Serratia proteamaculans (strain 568), this protein is 2-succinyl-6-hydroxy-2,4-cyclohexadiene-1-carboxylate synthase.